Here is a 604-residue protein sequence, read N- to C-terminus: Sulfite reductase [NADPH] flavoprotein alpha-component (604 aa).

A Flavodoxin-like domain is found at 66-204 (VTVLSASQTG…AANAWTDNIA (139 aa)). Residues 72-77 (SQTGNA), 119-122 (STQG), and 155-164 (LGDSSYPNFC) each bind FMN. An FAD-binding FR-type domain is found at 239–453 (ADPFPAALLA…VERNDGFRLP (215 aa)). FAD is bound by residues Thr-327, Gln-361, 391 to 394 (RLYS), 409 to 411 (TVG), and 424 to 427 (GGAS). Residues 524–525 (SR), 530–534 (KIYVQ), and Asp-566 each bind NADP(+). An FAD-binding site is contributed by Tyr-604.

The protein belongs to the NADPH-dependent sulphite reductase flavoprotein subunit CysJ family. It in the N-terminal section; belongs to the flavodoxin family. In the C-terminal section; belongs to the flavoprotein pyridine nucleotide cytochrome reductase family. Alpha(8)-beta(8). The alpha component is a flavoprotein, the beta component is a hemoprotein. It depends on FAD as a cofactor. FMN is required as a cofactor.

The enzyme catalyses hydrogen sulfide + 3 NADP(+) + 3 H2O = sulfite + 3 NADPH + 4 H(+). The protein operates within sulfur metabolism; hydrogen sulfide biosynthesis; hydrogen sulfide from sulfite (NADPH route): step 1/1. Functionally, component of the sulfite reductase complex that catalyzes the 6-electron reduction of sulfite to sulfide. This is one of several activities required for the biosynthesis of L-cysteine from sulfate. The flavoprotein component catalyzes the electron flow from NADPH -&gt; FAD -&gt; FMN to the hemoprotein component. The polypeptide is Sulfite reductase [NADPH] flavoprotein alpha-component (Neisseria meningitidis serogroup C (strain 053442)).